The following is a 156-amino-acid chain: Mediator of RNA polymerase II transcription subunit 28 (156 aa).

The interval 1–38 (MDYQQKPPQSSDPSPSPPDRPPGIRSPETPSNNQNNDI) is disordered. The stretch at 104–156 (PSRAESLKKDIAVMEEELKTKDELIKKHMRLFQESQKLVKEQIEKHRDELEKV) forms a coiled coil.

It belongs to the Mediator complex subunit 28 family. Dimers. Component of the Mediator complex. Interacts with GEBPL.

Its subcellular location is the nucleus. Functionally, component of the Mediator complex, a coactivator involved in the regulated transcription of nearly all RNA polymerase II-dependent genes. Mediator functions as a bridge to convey information from gene-specific regulatory proteins to the basal RNA polymerase II transcription machinery. The Mediator complex, having a compact conformation in its free form, is recruited to promoters by direct interactions with regulatory proteins and serves for the assembly of a functional pre-initiation complex with RNA polymerase II and the general transcription factors. This Arabidopsis thaliana (Mouse-ear cress) protein is Mediator of RNA polymerase II transcription subunit 28.